The primary structure comprises 73 residues: Putative membrane protein insertion efficiency factor (73 aa).

This sequence belongs to the UPF0161 family.

Its subcellular location is the cell inner membrane. Could be involved in insertion of integral membrane proteins into the membrane. The sequence is that of Putative membrane protein insertion efficiency factor from Neisseria meningitidis serogroup C (strain 053442).